The primary structure comprises 482 residues: MLLNELLKAIQPVQVTGDSRIEITGVNIDSRLVEAGQLFMAMRGTQTDGHAYIPAAIQKGATAILCEDIPEEPVAGITYIQVKDSEDAVGKIATTFYGNPTSQFELVGVTGTNGKTTIATLLYNTFRYFGYKVGLISTVCNYIDDQPIPTEHTTPDPITLNRLLGQMADEGCKYVFMEVSSHSIAQKRISGLKFAGGIFTNLTRDHLDYHKTVENYLKAKKKFFDDMPKNAFSLTNLDDKNGLVMTQNTRSKVYTYSLRSLSDFKGRVIESHFEGMLLDFNNHELAVQFIGKFNASNLLAVFGAAVLLGKKEEDVLLALSTLHPVAGRFDAIRSPKGVTAIVDYAHTPDALVNVLNAIHGVLEGKGKVITVVGAGGNRDKGKRPIMAKEAAKASDRVIITSDNPRFEEPQEIINDMLAGLDAEDMKKTLSIADRKEAIRTACMLAEKGDVILVAGKGHENYQEIKGVKHHFDDKEVLKEIFN.

Residue Ser-30 coordinates UDP-N-acetyl-alpha-D-muramoyl-L-alanyl-D-glutamate. 111–117 (GTNGKTT) is a binding site for ATP. Residues 153 to 154 (TT), Ser-180, Gln-186, and Arg-188 each bind UDP-N-acetyl-alpha-D-muramoyl-L-alanyl-D-glutamate. The residue at position 220 (Lys-220) is an N6-carboxylysine. Meso-2,6-diaminopimelate contacts are provided by residues Arg-378, 402–405 (DNPR), Gly-455, and Glu-459. The short motif at 402 to 405 (DNPR) is the Meso-diaminopimelate recognition motif element.

This sequence belongs to the MurCDEF family. MurE subfamily. The cofactor is Mg(2+). In terms of processing, carboxylation is probably crucial for Mg(2+) binding and, consequently, for the gamma-phosphate positioning of ATP.

It localises to the cytoplasm. It carries out the reaction UDP-N-acetyl-alpha-D-muramoyl-L-alanyl-D-glutamate + meso-2,6-diaminopimelate + ATP = UDP-N-acetyl-alpha-D-muramoyl-L-alanyl-gamma-D-glutamyl-meso-2,6-diaminopimelate + ADP + phosphate + H(+). It functions in the pathway cell wall biogenesis; peptidoglycan biosynthesis. Its function is as follows. Catalyzes the addition of meso-diaminopimelic acid to the nucleotide precursor UDP-N-acetylmuramoyl-L-alanyl-D-glutamate (UMAG) in the biosynthesis of bacterial cell-wall peptidoglycan. The protein is UDP-N-acetylmuramoyl-L-alanyl-D-glutamate--2,6-diaminopimelate ligase of Bacteroides thetaiotaomicron (strain ATCC 29148 / DSM 2079 / JCM 5827 / CCUG 10774 / NCTC 10582 / VPI-5482 / E50).